The chain runs to 576 residues: Proline--tRNA ligase (576 aa).

Belongs to the class-II aminoacyl-tRNA synthetase family. ProS type 1 subfamily. As to quaternary structure, homodimer.

The protein resides in the cytoplasm. It catalyses the reaction tRNA(Pro) + L-proline + ATP = L-prolyl-tRNA(Pro) + AMP + diphosphate. Functionally, catalyzes the attachment of proline to tRNA(Pro) in a two-step reaction: proline is first activated by ATP to form Pro-AMP and then transferred to the acceptor end of tRNA(Pro). As ProRS can inadvertently accommodate and process non-cognate amino acids such as alanine and cysteine, to avoid such errors it has two additional distinct editing activities against alanine. One activity is designated as 'pretransfer' editing and involves the tRNA(Pro)-independent hydrolysis of activated Ala-AMP. The other activity is designated 'posttransfer' editing and involves deacylation of mischarged Ala-tRNA(Pro). The misacylated Cys-tRNA(Pro) is not edited by ProRS. In Thiobacillus denitrificans (strain ATCC 25259 / T1), this protein is Proline--tRNA ligase.